We begin with the raw amino-acid sequence, 252 residues long: Adenosylcobinamide-GDP ribazoletransferase (252 aa).

6 consecutive transmembrane segments (helical) span residues 29-49 (LYWF…LGYV), 50-70 (GSLS…GIVL), 104-124 (VGSF…VAVV), 129-149 (FGLF…QVLL), 166-186 (FVAG…LALL), and 194-214 (FPTM…VGMV).

The protein belongs to the CobS family. It depends on Mg(2+) as a cofactor.

The protein resides in the cell inner membrane. It carries out the reaction alpha-ribazole + adenosylcob(III)inamide-GDP = adenosylcob(III)alamin + GMP + H(+). It catalyses the reaction alpha-ribazole 5'-phosphate + adenosylcob(III)inamide-GDP = adenosylcob(III)alamin 5'-phosphate + GMP + H(+). Its pathway is cofactor biosynthesis; adenosylcobalamin biosynthesis; adenosylcobalamin from cob(II)yrinate a,c-diamide: step 7/7. Its function is as follows. Joins adenosylcobinamide-GDP and alpha-ribazole to generate adenosylcobalamin (Ado-cobalamin). Also synthesizes adenosylcobalamin 5'-phosphate from adenosylcobinamide-GDP and alpha-ribazole 5'-phosphate. The chain is Adenosylcobinamide-GDP ribazoletransferase from Chlorobium chlorochromatii (strain CaD3).